Consider the following 124-residue polypeptide: Fluoride-specific ion channel FluC (124 aa).

Transmembrane regions (helical) follow at residues 5–25, 38–58, 69–89, and 99–119; these read ILAV…TGTW, TLAV…LFLL, GLIV…LDTL, and LALG…WAGL. Residues glycine 76 and threonine 79 each contribute to the Na(+) site.

This sequence belongs to the fluoride channel Fluc/FEX (TC 1.A.43) family.

The protein localises to the cell inner membrane. The catalysed reaction is fluoride(in) = fluoride(out). With respect to regulation, na(+) is not transported, but it plays an essential structural role and its presence is essential for fluoride channel function. In terms of biological role, fluoride-specific ion channel. Important for reducing fluoride concentration in the cell, thus reducing its toxicity. This chain is Fluoride-specific ion channel FluC, found in Pseudomonas syringae pv. syringae (strain B728a).